The chain runs to 492 residues: RNase aCSPSF2 (492 aa).

A divalent metal cation contacts are provided by histidine 130, histidine 132, aspartate 134, histidine 135, histidine 213, aspartate 234, and histidine 460.

Belongs to the metallo-beta-lactamase superfamily. RNA-metabolizing metallo-beta-lactamase-like family. Mg(2+) serves as cofactor.

Functionally, a 5'-3' exoribonuclease, more active on 5'-monophosphorylated and 5'-hydroxylated RNA than 5'-tri-phosphorylated RNA; note there is no evidence for accumulation of 5'-monophosphorylated RNA in this organism. Translation initiation factor 2 subunit gamma but not subunit alpha protects 5'-tri-phosphorylated RNA from degradation by this enzyme. In Saccharolobus solfataricus (strain ATCC 35092 / DSM 1617 / JCM 11322 / P2) (Sulfolobus solfataricus), this protein is RNase aCSPSF2.